We begin with the raw amino-acid sequence, 1116 residues long: Rho GTPase-activating protein 45 (1116 aa).

The tract at residues 1 to 72 is disordered; that stretch reads MFSRKKRELM…RPTSLSRHAS (72 aa). The span at 22 to 31 shows a compositional bias: polar residues; it reads GSPNPQSSSG. A phosphoserine mark is found at serine 23, serine 72, serine 92, and serine 98. The F-BAR domain occupies 268 to 538; the sequence is EEVDMLLQRC…SSKLYDPGQQ (271 aa). The stretch at 375–498 forms a coiled coil; it reads EHERRRKEIK…QIQEVIRQSD (124 aa). The tract at residues 422–457 is disordered; the sequence is VAKAEEEQQGTGPGAGTAASKALDKRRRLEEEAKNK. Residues 448 to 457 show a composition bias toward basic and acidic residues; the sequence is RRLEEEAKNK. A phosphoserine mark is found at serine 568, serine 577, serine 591, and serine 618. A disordered region spans residues 569–658; it reads PIMRTRKGSF…MSSSEELGDQ (90 aa). Residues 621-635 show a composition bias toward polar residues; it reads ISISDTEVGLDTSSG. Low complexity predominate over residues 643–652; sequence TSSSGTMSSS. The segment at 699 to 744 adopts a Phorbol-ester/DAG-type zinc-finger fold; it reads THRLRKLRTPAKCRECNSYVYFQGAECEECCLACHKKCLETLAIQC. The region spanning 758-971 is the Rho-GAP domain; that stretch reads QDFSQAALST…TLIVHYGLVF (214 aa). 4 positions are modified to phosphoserine: serine 946, serine 1017, serine 1020, and serine 1022. Disordered stretches follow at residues 1004–1035 and 1050–1116; these read EEAEDGSRESHAASNDSDSELEDASDPLSSSD and AGLE…PQFV. Composition is skewed to polar residues over residues 1080 to 1090 and 1105 to 1116; these read FNTNQSNNTSR and GGTSQERQPQFV.

It localises to the cytoplasm. It is found in the cell projection. The protein resides in the ruffle membrane. Its function is as follows. Contains a GTPase activator for the Rho-type GTPases (RhoGAP) domain that would be able to negatively regulate the actin cytoskeleton as well as cell spreading. However, also contains N-terminally a BAR-domin which is able to play an autoinhibitory effect on this RhoGAP activity. In Mus musculus (Mouse), this protein is Rho GTPase-activating protein 45.